The primary structure comprises 456 residues: uncharacterized protein (456 aa).

Positions 3–61 constitute a TRAM domain; it reads TIKKNEVKTGKVIDLTHEGHGVVKVDRYPIFIPNALIDEEIKFKLIKVKKNFAIGKLIE. [4Fe-4S] cluster-binding residues include cysteine 74, cysteine 80, cysteine 83, and cysteine 162. S-adenosyl-L-methionine-binding residues include glutamine 286, tyrosine 315, glutamate 336, and aspartate 384. Cysteine 411 functions as the Nucleophile in the catalytic mechanism.

The protein belongs to the class I-like SAM-binding methyltransferase superfamily. RNA M5U methyltransferase family.

This is an uncharacterized protein from Staphylococcus epidermidis (strain ATCC 12228 / FDA PCI 1200).